Consider the following 1020-residue polypeptide: Neurofilament heavy polypeptide (1020 aa).

Residues 1-100 (MMSFGGADAL…VATSRSEKEQ (100 aa)) form a head region. The tract at residues 58–83 (VSASPSRFRGAGAASSTDSLDTLSNG) is disordered. The span at 71 to 82 (ASSTDSLDTLSN) shows a compositional bias: polar residues. 2 positions are modified to phosphoserine: serine 76 and serine 124. Residues 97-413 (EKEQLQALND…KLLEGEECRI (317 aa)) enclose the IF rod domain. Residues 101-132 (LQALNDRFAGYIDKVRQLEAHNRSLEGEAAAL) form a coil 1A region. The segment at 133–145 (RQQQAGRSAMGEL) is linker 1. The tract at residues 146 to 244 (YEREVREMRG…QEEVGELLGQ (99 aa)) is coil 1B. Positions 245-266 (IQGSGAAQAQMQAETRDALKCD) are linker 12. The coil 2A stretch occupies residues 267 to 288 (VTSALREIRAQLEGHAVQSTLQ). Residues 289–292 (SEEW) are linker 2. Residues 293–413 (FRVRLDRLSE…KLLEGEECRI (121 aa)) form a coil 2B region. Serine 347 and serine 421 each carry phosphoserine. The tract at residues 414–1020 (GFGPIPFSLP…ATEDKAAKGK (607 aa)) is tail. The disordered stretch occupies residues 456 to 1020 (IVEEQTEETQ…ATEDKAAKGK (565 aa)). Composition is skewed to acidic residues over residues 459–475 (EQTEETQVTEEVTEEEE) and 483–498 (GKEEEGGEEEEAEGGE). 28 positions are modified to phosphoserine: serine 511, serine 526, serine 532, serine 540, serine 546, serine 552, serine 560, serine 566, serine 574, serine 580, serine 586, serine 594, serine 600, serine 606, serine 614, serine 620, serine 628, serine 634, serine 640, serine 648, serine 654, serine 662, serine 668, serine 676, serine 682, serine 690, serine 696, and serine 704. Basic and acidic residues predominate over residues 511-1020 (SPEKEAKSPV…ATEDKAAKGK (510 aa)). Repeat copies occupy residues 525–530 (KSPAEA), 531–536 (KSPEKE), 539–544 (KSPAEV), and 545–550 (KSPEKA). The segment at 525–826 (KSPAEAKSPE…KEEVKSPVKE (302 aa)) is 30 X 6 AA repeats of K-S-P-[AEPV]-[EAK]-[AEVK]. Repeat unit 5 spans residues 559-564 (KSPPEA). A run of 2 repeats spans residues 573-578 (KSPAEV) and 579-584 (KSPEKA). Tandem repeats lie at residues 593–598 (KSPAEA) and 599–604 (KSPEKA). Repeat 10 spans residues 613 to 618 (KSPAEA). A run of 4 repeats spans residues 627-632 (KSPAEV), 633-638 (KSPEKA), 639-644 (KSPTKE), and 647-652 (KSPEKA). 12 consecutive repeat copies span residues 661–666 (KSPEKA), 667–672 (KSPVKA), 675–680 (KSPEKA), 681–686 (KSPVKA), 689–694 (KSPEKA), 695–700 (KSPVKE), 703–708 (KSPEKA), 709–714 (KSPVKE), 717–722 (KSPEKA), 723–728 (KSPVKE), 737–742 (KSPVKE), and 745–750 (KSPEKA). Phosphoserine occurs at positions 718, 724, and 738. Phosphoserine occurs at positions 752 and 763. Repeat 27 spans residues 762-767 (KSPEAK). Threonine 768 bears the Phosphothreonine mark. 3 tandem repeats follow at residues 786–791 (KSPVKE), 794–799 (KSPEKA), and 821–826 (KSPVKE). Residues serine 787, serine 795, serine 822, and serine 888 each carry the phosphoserine modification.

This sequence belongs to the intermediate filament family. In terms of assembly, forms heterodimers with NEFL; which can further hetero-oligomerize (in vitro). Forms heterodimers with INA (in vitro). Post-translationally, there are a number of repeats of the tripeptide K-S-P, NFH is phosphorylated on a number of the serines in this motif. It is thought that phosphorylation of NFH results in the formation of interfilament cross bridges that are important in the maintenance of axonal caliber. Phosphorylation seems to play a major role in the functioning of the larger neurofilament polypeptides (NF-M and NF-H), the levels of phosphorylation being altered developmentally and coincidentally with a change in the neurofilament function. In terms of processing, phosphorylated in the head and rod regions by the PKC kinase PKN1, leading to the inhibition of polymerization.

The protein localises to the cytoplasm. It is found in the cytoskeleton. Its subcellular location is the cell projection. It localises to the axon. In terms of biological role, neurofilaments usually contain three intermediate filament proteins: NEFL, NEFM, and NEFH which are involved in the maintenance of neuronal caliber. NEFH has an important function in mature axons that is not subserved by the two smaller NF proteins. May additionally cooperate with the neuronal intermediate filament proteins PRPH and INA to form neuronal filamentous networks. The chain is Neurofilament heavy polypeptide (NEFH) from Homo sapiens (Human).